We begin with the raw amino-acid sequence, 192 residues long: MSTIKSGDIDKGSFLLFKGMPHIVLEREFSKMGRGGSIVRLKLKNLKNKSVIKETLKGSDTVEEIEVLEVNSQYLYKDNESLIFMDLETYDQFSVNLRDVVNLEDKVLFLQEAEVYSLIKWGNEVIDLKLPPKVAFEVIDAEIAVKGDTVTNAMKNVTLHTGLVVKAPLFINIGDKILVNSETKEYAERVKV.

This sequence belongs to the elongation factor P family.

Its subcellular location is the cytoplasm. It participates in protein biosynthesis; polypeptide chain elongation. In terms of biological role, involved in peptide bond synthesis. Stimulates efficient translation and peptide-bond synthesis on native or reconstituted 70S ribosomes in vitro. Probably functions indirectly by altering the affinity of the ribosome for aminoacyl-tRNA, thus increasing their reactivity as acceptors for peptidyl transferase. The sequence is that of Elongation factor P from Borrelia duttonii (strain Ly).